Here is a 127-residue protein sequence, read N- to C-terminus: Small ribosomal subunit protein bS6 (127 aa).

Residues 101–127 (PMMKEEKARDLLQGAKADAPAEQPAAA) form a disordered region. The span at 115-127 (AKADAPAEQPAAA) shows a compositional bias: low complexity.

It belongs to the bacterial ribosomal protein bS6 family.

Binds together with bS18 to 16S ribosomal RNA. The protein is Small ribosomal subunit protein bS6 of Thiobacillus denitrificans (strain ATCC 25259 / T1).